Reading from the N-terminus, the 185-residue chain is Elongation factor P (185 aa).

Belongs to the elongation factor P family.

Its subcellular location is the cytoplasm. It participates in protein biosynthesis; polypeptide chain elongation. Functionally, involved in peptide bond synthesis. Stimulates efficient translation and peptide-bond synthesis on native or reconstituted 70S ribosomes in vitro. Probably functions indirectly by altering the affinity of the ribosome for aminoacyl-tRNA, thus increasing their reactivity as acceptors for peptidyl transferase. The sequence is that of Elongation factor P from Herpetosiphon aurantiacus (strain ATCC 23779 / DSM 785 / 114-95).